Reading from the N-terminus, the 250-residue chain is Biosynthetic peptidoglycan transglycosylase (250 aa).

The helical transmembrane segment at 15–35 threads the bilayer; sequence AVLLFFVSSLGFVLLYRFVPV.

This sequence belongs to the glycosyltransferase 51 family.

It is found in the cell inner membrane. It catalyses the reaction [GlcNAc-(1-&gt;4)-Mur2Ac(oyl-L-Ala-gamma-D-Glu-L-Lys-D-Ala-D-Ala)](n)-di-trans,octa-cis-undecaprenyl diphosphate + beta-D-GlcNAc-(1-&gt;4)-Mur2Ac(oyl-L-Ala-gamma-D-Glu-L-Lys-D-Ala-D-Ala)-di-trans,octa-cis-undecaprenyl diphosphate = [GlcNAc-(1-&gt;4)-Mur2Ac(oyl-L-Ala-gamma-D-Glu-L-Lys-D-Ala-D-Ala)](n+1)-di-trans,octa-cis-undecaprenyl diphosphate + di-trans,octa-cis-undecaprenyl diphosphate + H(+). Its pathway is cell wall biogenesis; peptidoglycan biosynthesis. In terms of biological role, peptidoglycan polymerase that catalyzes glycan chain elongation from lipid-linked precursors. In Bdellovibrio bacteriovorus (strain ATCC 15356 / DSM 50701 / NCIMB 9529 / HD100), this protein is Biosynthetic peptidoglycan transglycosylase.